The primary structure comprises 563 residues: Arginine--tRNA ligase (563 aa).

The 'HIGH' region signature appears at 123–133 (PNIAKDMHVGH).

Belongs to the class-I aminoacyl-tRNA synthetase family. Monomer.

It localises to the cytoplasm. The enzyme catalyses tRNA(Arg) + L-arginine + ATP = L-arginyl-tRNA(Arg) + AMP + diphosphate. The protein is Arginine--tRNA ligase of Chlamydia trachomatis serovar A (strain ATCC VR-571B / DSM 19440 / HAR-13).